The following is a 1020-amino-acid chain: Probable leucine-rich repeat receptor-like serine/threonine-protein kinase At3g14840 (1020 aa).

Residues 1–26 (MSLNRQLLFTYYFIVSLILFSDFVSS) form the signal peptide. Topologically, residues 27 to 614 (ATLPKEEVDA…GTGGGSSVGT (588 aa)) are extracellular. Residues asparagine 50 and asparagine 81 are each glycosylated (N-linked (GlcNAc...) asparagine). LRR repeat units lie at residues 86–110 (ICHVTNIVLKAQDLQGSLPTDLSGL), 111–134 (PFLQELDLTRNYLNGSIPPEWGAS), 136–157 (LLNISLLGNRISGSIPKELGNL), 158–181 (TTLSGLVLEYNQLSGKIPPELGNL), 182–204 (PNLKRLLLSSNNLSGEIPSTFAK), 206–231 (TTLTDLRISDNQFTGAIPDFIQNWKG), 253–276 (LGTLTDLRITDLSGPESPFPPLRN), 277–301 (MTSMKYLILRNCNLTGDLPAYLGQN), 302–324 (RKLKNLDLSFNKLSGPIPATYSG), and 326–349 (SDVDFIYFTSNMLNGQVPSWMVDQ). Residues asparagine 124, asparagine 138, and asparagine 156 are each glycosylated (N-linked (GlcNAc...) asparagine). N-linked (GlcNAc...) asparagine glycosylation occurs at asparagine 193. N-linked (GlcNAc...) asparagine glycosylation is found at asparagine 276 and asparagine 289. N-linked (GlcNAc...) asparagine glycans are attached at residues asparagine 359, asparagine 386, asparagine 389, asparagine 417, asparagine 461, asparagine 469, and asparagine 498. One copy of the LRR 11 repeat lies at 479 to 501 (QARLSAISLTYQALCLGKGNYTV). A helical transmembrane segment spans residues 615–635 (VVGSVIASTVFLVLLIGGILW). Residues 636 to 1020 (WRGCLRPKSQ…LDSAYWNTRT (385 aa)) lie on the Cytoplasmic side of the membrane. In terms of domain architecture, Protein kinase spans 672–949 (FDPANKIGEG…VSMLEGHSTV (278 aa)). Residues 678–686 (IGEGGFGPV) and lysine 700 each bind ATP. Position 745 is a phosphotyrosine (tyrosine 745). Aspartate 798 serves as the catalytic Proton acceptor. Serine 831 carries the post-translational modification Phosphoserine. A phosphothreonine mark is found at threonine 832 and threonine 837. Tyrosine 845 carries the phosphotyrosine modification.

It belongs to the protein kinase superfamily. Ser/Thr protein kinase family.

It is found in the cell membrane. The catalysed reaction is L-seryl-[protein] + ATP = O-phospho-L-seryl-[protein] + ADP + H(+). It carries out the reaction L-threonyl-[protein] + ATP = O-phospho-L-threonyl-[protein] + ADP + H(+). The chain is Probable leucine-rich repeat receptor-like serine/threonine-protein kinase At3g14840 (LRR-RLK) from Arabidopsis thaliana (Mouse-ear cress).